We begin with the raw amino-acid sequence, 36 residues long: Photosystem I reaction center subunit VIII (36 aa).

Residues 6–26 (LPSIFVPLVGLVFPAIAMASL) form a helical membrane-spanning segment.

The protein belongs to the PsaI family.

It is found in the plastid. The protein localises to the chloroplast thylakoid membrane. In terms of biological role, may help in the organization of the PsaL subunit. The polypeptide is Photosystem I reaction center subunit VIII (Liriodendron tulipifera (Tuliptree)).